The sequence spans 393 residues: Pectate lyase A (393 aa).

The first 32 residues, 1 to 32 (MMNKASGRSFTRSSKYLLATLIAGMMASGVSA), serve as a signal peptide directing secretion. Ca(2+) contacts are provided by Glu-174, Asp-176, Asp-216, and Asp-220. Arg-273 is a catalytic residue. Cys-330 and Cys-358 are joined by a disulfide.

The protein belongs to the polysaccharide lyase 1 family. PLADES subfamily. Ca(2+) is required as a cofactor.

It localises to the secreted. The enzyme catalyses Eliminative cleavage of (1-&gt;4)-alpha-D-galacturonan to give oligosaccharides with 4-deoxy-alpha-D-galact-4-enuronosyl groups at their non-reducing ends.. It functions in the pathway glycan metabolism; pectin degradation; 2-dehydro-3-deoxy-D-gluconate from pectin: step 2/5. Its function is as follows. Involved in maceration and soft-rotting of plant tissue. This Dickeya chrysanthemi (Pectobacterium chrysanthemi) protein is Pectate lyase A (pelA).